Reading from the N-terminus, the 266-residue chain is Glucosamine-6-phosphate deaminase (266 aa).

Residue Asp72 is the Proton acceptor; for enolization step of the active site. Asp141 (for ring-opening step) is an active-site residue. Residue His143 is the Proton acceptor; for ring-opening step of the active site. Glu148 (for ring-opening step) is an active-site residue.

It belongs to the glucosamine/galactosamine-6-phosphate isomerase family. NagB subfamily. In terms of assembly, homohexamer.

It catalyses the reaction alpha-D-glucosamine 6-phosphate + H2O = beta-D-fructose 6-phosphate + NH4(+). The protein operates within amino-sugar metabolism; N-acetylneuraminate degradation; D-fructose 6-phosphate from N-acetylneuraminate: step 5/5. With respect to regulation, allosterically activated by N-acetylglucosamine 6-phosphate (GlcNAc6P). In terms of biological role, catalyzes the reversible isomerization-deamination of glucosamine 6-phosphate (GlcN6P) to form fructose 6-phosphate (Fru6P) and ammonium ion. This chain is Glucosamine-6-phosphate deaminase, found in Salmonella typhi.